The chain runs to 378 residues: Zinc transporter 7 (378 aa).

At 1 to 37 (MLPLSIKDDEYKPPKFNLFGKISGWFRSILSDKTSRN) the chain is on the cytoplasmic side. A helical membrane pass occupies residues 38 to 58 (LFFFLCLNLSFAFVELLYGIW). The Lumenal portion of the chain corresponds to 59–67 (SNCLGLISD). A helical transmembrane segment spans residues 68–88 (SFHMFFDSTAILAGLAASVIS). Residues 89-102 (KWRDNDAFSYGYVR) lie on the Cytoplasmic side of the membrane. The helical transmembrane segment at 103 to 123 (AEVLAGFVNGLFLIFTAFFIF) threads the bilayer. Residues 124 to 140 (SEGVERALAPPDVHHER) lie on the Lumenal side of the membrane. The helical transmembrane segment at 141-161 (LLLVSILGFVVNLVGIFVFNH) threads the bilayer. The interval 161–220 (HGGHGHSHGSGHGHSHSLFNGALDHSHGHEDHCHSHGAKHGGAHSHDHDHAHGHGHLHSH) is his-rich loop. At 162–238 (GGHGHSHGSG…AGPSRQILQG (77 aa)) the chain is on the cytoplasmic side. Residues 186–228 (SHGHEDHCHSHGAKHGGAHSHDHDHAHGHGHLHSHDGPSFKET) are disordered. A compositionally biased stretch (basic and acidic residues) spans 204–224 (HSHDHDHAHGHGHLHSHDGPS). Residues 239-259 (VFLHILADTLGSIGVIASAIM) traverse the membrane as a helical segment. Topologically, residues 260 to 264 (MQNFG) are lumenal. The chain crosses the membrane as a helical span at residues 265 to 285 (LMIADPICSILIAILIVVSVI). Topologically, residues 286–378 (PLLRESIGIL…LYVQIDFAAM (93 aa)) are cytoplasmic.

This sequence belongs to the cation diffusion facilitator (CDF) transporter (TC 2.A.4) family. SLC30A subfamily. Homooligomer.

The protein localises to the golgi apparatus membrane. The protein resides in the cytoplasmic vesicle. It is found in the golgi apparatus. Its subcellular location is the trans-Golgi network. It localises to the sarcoplasmic reticulum. The protein localises to the mitochondrion. It carries out the reaction Zn(2+)(in) = Zn(2+)(out). Zinc ion transporter mediating zinc entry from the cytosol into the lumen of organelles along the secretory pathway. By contributing to zinc ion homeostasis within the early secretory pathway, regulates the activation and folding of enzymes like alkaline phosphatases. The polypeptide is Zinc transporter 7 (Rattus norvegicus (Rat)).